The primary structure comprises 305 residues: Serine/threonine-protein phosphatase PP-X isozyme 1 (305 aa).

Mn(2+) is bound by residues Asp-51, His-53, Asp-79, and Asn-111. His-112 acts as the Proton donor in catalysis. Mn(2+) contacts are provided by His-161 and His-236.

It belongs to the PPP phosphatase family. PP-4 (PP-X) subfamily. As to quaternary structure, interacts with TAP46. The cofactor is Mn(2+). Ubiquitous, mostly expressed in root mersitems, flowers, and vascular tissues.

Its subcellular location is the plastid stroma. It carries out the reaction O-phospho-L-seryl-[protein] + H2O = L-seryl-[protein] + phosphate. The enzyme catalyses O-phospho-L-threonyl-[protein] + H2O = L-threonyl-[protein] + phosphate. This chain is Serine/threonine-protein phosphatase PP-X isozyme 1 (PPX1), found in Arabidopsis thaliana (Mouse-ear cress).